We begin with the raw amino-acid sequence, 337 residues long: Homeobox protein knotted-1-like 4 (337 aa).

2 disordered regions span residues 1–56 (MEQQ…SFHE) and 159–190 (FTLD…GLPE). A compositionally biased stretch (low complexity) spans 27–38 (PTSTSTSPAVPS). The ELK domain maps to 200-220 (ELKSHLLNKYSGYLSSLWREL). Positions 221–284 (SKKKKKGKLP…NQRKRHWKPT (64 aa)) form a DNA-binding region, homeobox; TALE-type.

It belongs to the TALE/KNOX homeobox family.

It localises to the nucleus. In Oryza sativa subsp. japonica (Rice), this protein is Homeobox protein knotted-1-like 4 (OSH10).